Reading from the N-terminus, the 525-residue chain is Peptide chain release factor 3 (525 aa).

Residues 11 to 279 (NNRRTFAIIS…AYLKYAPKPA (269 aa)) enclose the tr-type G domain. Residues 20-27 (SHPDAGKT), 88-92 (DTPGH), and 142-145 (NKLD) each bind GTP.

The protein belongs to the TRAFAC class translation factor GTPase superfamily. Classic translation factor GTPase family. PrfC subfamily.

It is found in the cytoplasm. Its function is as follows. Increases the formation of ribosomal termination complexes and stimulates activities of RF-1 and RF-2. It binds guanine nucleotides and has strong preference for UGA stop codons. It may interact directly with the ribosome. The stimulation of RF-1 and RF-2 is significantly reduced by GTP and GDP, but not by GMP. The protein is Peptide chain release factor 3 of Ligilactobacillus salivarius (strain UCC118) (Lactobacillus salivarius).